Here is a 968-residue protein sequence, read N- to C-terminus: Isoleucine--tRNA ligase (968 aa).

The short motif at 68 to 78 (PYANGALHMGH) is the 'HIGH' region element. L-isoleucyl-5'-AMP is bound at residue Glu-584. Residues 625-629 (KMSKS) carry the 'KMSKS' region motif. Lys-628 contacts ATP. Residues Cys-938, Cys-941, Cys-958, and Cys-961 each coordinate Zn(2+).

The protein belongs to the class-I aminoacyl-tRNA synthetase family. IleS type 1 subfamily. In terms of assembly, monomer. The cofactor is Zn(2+).

The protein localises to the cytoplasm. The catalysed reaction is tRNA(Ile) + L-isoleucine + ATP = L-isoleucyl-tRNA(Ile) + AMP + diphosphate. Functionally, catalyzes the attachment of isoleucine to tRNA(Ile). As IleRS can inadvertently accommodate and process structurally similar amino acids such as valine, to avoid such errors it has two additional distinct tRNA(Ile)-dependent editing activities. One activity is designated as 'pretransfer' editing and involves the hydrolysis of activated Val-AMP. The other activity is designated 'posttransfer' editing and involves deacylation of mischarged Val-tRNA(Ile). The polypeptide is Isoleucine--tRNA ligase (Prochlorococcus marinus (strain MIT 9313)).